The sequence spans 839 residues: Autophagy-related protein 9A (839 aa).

N-acetylalanine is present on Ala2. The Cytoplasmic segment spans residues 2-61 (AQFDTEYQRLEASYSDSPPGEEDLLVHVAEGSKSPWHHIENLDLFFSRVYNLHQKNGFTC). Positions 8–11 (YQRL) match the Tyrosine-based sorting signal motif. Phosphoserine is present on residues Ser14, Ser16, and Ser18. Residues 62 to 84 (MLIGEIFELMQFLFVVAFTTFLV) traverse the membrane as a helical segment. At 85–128 (SCVDYDILFANKMVNHSLHPTEPVKVTLPDAFLPAQVCSARIQE) the chain is on the lumenal side. Asn99 carries an N-linked (GlcNAc...) asparagine glycan. A helical transmembrane segment spans residues 129–154 (NGSLITILVIAGVFWIHRLIKFIYNI). Residues 155–290 (CCYWEIHSFY…ELAQRLSNRI (136 aa)) are Cytoplasmic-facing. The stretch at 291 to 301 (LWIGIANFLLC) is an intramembrane region. The Cytoplasmic segment spans residues 302–319 (PLILIWQILYAFFSYAEV). The stretch at 320-328 (LKREPGALG) is an intramembrane region. Over 329-371 (ARCWSLYGRCYLRHFNELEHELQSRLNRGYKPASKYMNCFLSP) the chain is Cytoplasmic. Residues 372 to 397 (LLTLLAKNGAFFAGSILAVLIALTIY) traverse the membrane as a helical segment. The Lumenal segment spans residues 398-406 (DEDVLAVEH). The chain crosses the membrane as a helical span at residues 407–424 (VLTTVTLLGVTVTVCRSF). Over 425 to 470 (IPDQHMVFCPEQLLRVILAHIHYMPDHWQGNAHRSQTRDEFAQLFQ) the chain is Cytoplasmic. The stretch at 471–480 (YKAVFILEEL) is an intramembrane region. The Cytoplasmic segment spans residues 481 to 483 (LSP). The stretch at 484 to 492 (IVTPLILIF) is an intramembrane region. Residues 493-839 (CLRPRALEII…DELPPQVHKV (347 aa)) lie on the Cytoplasmic side of the membrane. Residues Ser656, Ser735, Ser738, Ser741, and Ser828 each carry the phosphoserine modification. Disordered stretches follow at residues 656-689 (SPLQ…SSVW) and 717-839 (HKQQ…VHKV). The span at 724–736 (EPERHVWHRRESD) shows a compositional bias: basic and acidic residues. Composition is skewed to acidic residues over residues 737-747 (ESGESAPEEGG) and 823-832 (VPEEGSEDEL).

Belongs to the ATG9 family. As to quaternary structure, homotrimer; forms a homotrimer with a central pore that forms a path between the two membrane leaflets. Interacts (via cytoplasmic its C-terminus) with ATG2A. Interacts with SUPT20H. Interacts (via the tyrosine-based sorting signal motif) with AP4M1; promoting association with the AP-4 complex. Interacts with ARFIP1 and ARFIP2. Interacts with PI4K2A and PI4KB. Interacts with ATG4A; the interaction is direct and promotes ATG9A trafficking. Post-translationally, ufmylated in a DDRGK1 dependent manner.

The protein resides in the preautophagosomal structure membrane. The protein localises to the cytoplasmic vesicle. It localises to the autophagosome membrane. Its subcellular location is the golgi apparatus. It is found in the trans-Golgi network membrane. The protein resides in the late endosome membrane. The protein localises to the recycling endosome membrane. It localises to the endoplasmic reticulum membrane. Its subcellular location is the mitochondrion membrane. The catalysed reaction is a 1,2-diacyl-sn-glycero-3-phosphocholine(in) = a 1,2-diacyl-sn-glycero-3-phosphocholine(out). It catalyses the reaction a 1,2-diacyl-sn-glycero-3-phospho-L-serine(in) = a 1,2-diacyl-sn-glycero-3-phospho-L-serine(out). The enzyme catalyses a 1,2-diacyl-sn-glycero-3-phosphoethanolamine(in) = a 1,2-diacyl-sn-glycero-3-phosphoethanolamine(out). Phospholipid scramblase involved in autophagy by mediating autophagosomal membrane expansion. Cycles between the preautophagosomal structure/phagophore assembly site (PAS) and the cytoplasmic vesicle pool and supplies membrane for the growing autophagosome. Lipid scramblase activity plays a key role in preautophagosomal structure/phagophore assembly by distributing the phospholipids that arrive through ATG2 (ATG2A or ATG2B) from the cytoplasmic to the luminal leaflet of the bilayer, thereby driving autophagosomal membrane expansion. Also required to supply phosphatidylinositol 4-phosphate to the autophagosome initiation site by recruiting the phosphatidylinositol 4-kinase beta (PI4KB) in a process dependent on ARFIP2, but not ARFIP1. In addition to autophagy, also plays a role in necrotic cell death. This chain is Autophagy-related protein 9A, found in Rattus norvegicus (Rat).